Reading from the N-terminus, the 490-residue chain is Aspartyl aminopeptidase 4 (490 aa).

His97 provides a ligand contact to Zn(2+). Residue His173 coordinates substrate. Zn(2+) is bound by residues Asp273, Glu308, Glu309, and Asp362. Glu308 is a binding site for substrate. Substrate-binding residues include Asp362, His365, Lys390, and Tyr397. His456 contacts Zn(2+).

This sequence belongs to the peptidase M18 family. As to quaternary structure, tetrahedron-shaped homododecamer built from six homodimers. Zn(2+) is required as a cofactor.

It localises to the cytoplasm. It is found in the vacuole lumen. The catalysed reaction is Release of an N-terminal aspartate or glutamate from a peptide, with a preference for aspartate.. The metalloproteases inhibitors EDTA and 1.10-phenanthroline both inhibit the activity, whereas bestatin, an inhibitor of most aminopeptidases, does not affect enzyme activity. Functionally, aspartyl aminopeptidase that contributes to peptide degradation both in the cytosol and the vacuole. Cells may respond to environmental conditions by changing the distributions of the cytosolic enzyme to the vacuole when cells need more active vacuolar degradation. This chain is Aspartyl aminopeptidase 4 (APE4), found in Saccharomyces cerevisiae (strain ATCC 204508 / S288c) (Baker's yeast).